We begin with the raw amino-acid sequence, 1337 residues long: Receptor-type tyrosine-protein phosphatase eta (1337 aa).

The N-terminal stretch at 1-35 (MKPAAREARLPPRSPGLRWALPLLLLLLRLGQILC) is a signal peptide. Over 36–975 (AGGTPSPIPD…LPQDPGVICG (940 aa)) the chain is Extracellular. Composition is skewed to polar residues over residues 67–82 (SFHKQNGTGTPQVETN) and 89–119 (SSGANDSLRTPEQGSNGTDGASQKTPSSTGP). Residues 67–124 (SFHKQNGTGTPQVETNTSEDGESSGANDSLRTPEQGSNGTDGASQKTPSSTGPSPVFD) form a disordered region. 34 N-linked (GlcNAc...) asparagine glycosylation sites follow: Asn72, Asn82, Asn93, Asn104, Asn142, Asn172, Asn192, Asn231, Asn258, Asn278, Asn342, Asn351, Asn376, Asn391, Asn396, Asn413, Asn431, Asn501, Asn525, Asn536, Asn582, Asn603, Asn618, Asn628, Asn637, Asn666, Asn669, Asn761, Asn772, Asn784, Asn790, Asn824, Asn910, and Asn937. Fibronectin type-III domains are found at residues 121–209 (PVFD…EPIP), 207–291 (PIPV…EGGL), 271–364 (NPYL…EFRT), 368–456 (QVFD…PPVP), 457–541 (VSDF…TVPS), 542–623 (AVFD…TAQY), 625–720 (RPSN…TDPA), 721–817 (SMAS…TDPP), and 816–902 (PPPP…SEVL). The disordered stretch occupies residues 278–327 (NKTKGDPLGTEGGLDASNTERSRAGSPTAPVHDESLVGPVDPSSGQQSRD). A helical transmembrane segment spans residues 976 to 996 (AVFGCIFGALVIVTVGGFIFW). Residues 997–1337 (RKKRKDAKNN…TFGKTNGYIA (341 aa)) are Cytoplasmic-facing. Ser1009 carries the post-translational modification Phosphoserine. The Tyrosine-protein phosphatase domain maps to 1041 to 1298 (FAEEYEDLKL…VFLNQCVLDI (258 aa)). Substrate is bound by residues Asp1205, 1239–1245 (CSAGVGR), and Gln1283. Catalysis depends on Cys1239, which acts as the Phosphocysteine intermediate.

The protein belongs to the protein-tyrosine phosphatase family. Receptor class 3 subfamily. As to quaternary structure, monomer. Interacts with CTNNB1 (phosphorylated) and JUP (phosphorylated). Interacts with FLT3 (phosphorylated). Interacts with GAB1 and GRB2. In terms of processing, N- and O-glycosylated. N-glycosylated. In terms of tissue distribution, expressed in the promyelocytic cell line HL-60, the granulocyte-macrophage colony-stimulating factor-dependent leukemic cell line F-36P, and the IL3 and erythropoietin-dependent leukemic cell line F-36E. Expressed predominantly in epithelial cells and lymphocytes. Enhanced expression at high cell density. As to expression, expressed in the brain.

The protein localises to the cell membrane. The protein resides in the cell projection. It is found in the ruffle membrane. Its subcellular location is the cell junction. It localises to the secreted. The protein localises to the extracellular space. The enzyme catalyses O-phospho-L-tyrosyl-[protein] + H2O = L-tyrosyl-[protein] + phosphate. Its function is as follows. Tyrosine phosphatase which dephosphorylates or contributes to the dephosphorylation of CTNND1, FLT3, PDGFRB, MET, KDR, LYN, SRC, MAPK1, MAPK3, EGFR, TJP1, OCLN, PIK3R1 and PIK3R2. Plays a role in cell adhesion, migration, proliferation and differentiation. Has a role in megakaryocytes and platelet formation. Involved in vascular development. Regulator of macrophage adhesion and spreading. Positively affects cell-matrix adhesion. Positive regulator of platelet activation and thrombosis. Negative regulator of cell proliferation. Negative regulator of PDGF-stimulated cell migration; through dephosphorylation of PDGFR. Positive regulator of endothelial cell survival, as well as of VEGF-induced SRC and AKT activation; through KDR dephosphorylation. Negative regulator of EGFR signaling pathway; through EGFR dephosphorylation. Enhances the barrier function of epithelial junctions during reassembly. Negatively regulates T-cell receptor (TCR) signaling. Upon T-cell TCR activation, it is up-regulated and excluded from the immunological synapses, while upon T-cell-antigen presenting cells (APC) disengagement, it is no longer excluded and can dephosphorylate PLCG1 and LAT to down-regulate prolongation of signaling. Functionally, activates angiogenesis and cell migration. Downregulates the expression of the endothelial adhesion molecules ICAM1 and VCAM1. This is Receptor-type tyrosine-protein phosphatase eta (PTPRJ) from Homo sapiens (Human).